The following is a 133-amino-acid chain: Small ribosomal subunit protein uS9 (133 aa).

The span at 98–113 (RKPLKTEGHLSRDPRA) shows a compositional bias: basic and acidic residues. The tract at residues 98-133 (RKPLKTEGHLSRDPRAKERRKYGLKKARKAPQFSKR) is disordered. Basic residues predominate over residues 114–133 (KERRKYGLKKARKAPQFSKR).

This sequence belongs to the universal ribosomal protein uS9 family.

This Parasynechococcus marenigrum (strain WH8102) protein is Small ribosomal subunit protein uS9.